The primary structure comprises 363 residues: Pyruvate dehydrogenase E1 component subunit alpha, mitochondrial (363 aa).

Residues 1 to 2 (RN) constitute a mitochondrion transit peptide. The residue at position 36 (Lys36) is an N6-acetyllysine; alternate. An N6-succinyllysine; alternate modification is found at Lys36. Pyruvate is bound by residues His65, Tyr91, Arg92, Ala130, Gly138, Val140, Asp169, Gly170, Ala171, Asn198, and Tyr200. Residues Tyr91 and Arg92 each coordinate thiamine diphosphate. Gly138, Val140, Asp169, Gly170, Ala171, and Asn198 together coordinate thiamine diphosphate. Position 169 (Asp169) interacts with Mg(2+). The Mg(2+) site is built by Asn198 and Tyr200. Phosphoserine; by PDK1 is present on Ser205. N6-acetyllysine; alternate is present on Lys217. Lys217 bears the N6-succinyllysine; alternate mark. Position 240 is an N6-acetyllysine (Lys240). N6-succinyllysine is present on Lys250. His265 contacts thiamine diphosphate. At Ser266 the chain carries Phosphoserine; by PDK1, PDK2, PDK3 and PDK4. The residue at position 268 (Ser268) is a Phosphoserine. Position 273 is a phosphoserine; by PDK1, PDK2, PDK3 and PDK4 (Ser273). Tyr274 bears the Phosphotyrosine mark. N6-acetyllysine; alternate is present on Lys286. Lys286 bears the N6-succinyllysine; alternate mark. Lys294 and Lys309 each carry N6-acetyllysine. N6-succinyllysine is present on Lys358.

As to quaternary structure, heterotetramer of two PDHA1 and two PDHB subunits. The heterotetramer interacts with DLAT, and is part of the multimeric pyruvate dehydrogenase complex that contains multiple copies of pyruvate dehydrogenase (E1), dihydrolipoamide acetyltransferase (DLAT, E2) and lipoamide dehydrogenase (DLD, E3). These subunits are bound to an inner core composed of about 48 DLAT and 12 PDHX molecules. Thiamine diphosphate serves as cofactor. It depends on Mg(2+) as a cofactor. In terms of processing, phosphorylation at Ser-205, Ser-266 and Ser-273 by PDK family kinases inactivates the enzyme; for this phosphorylation at a single site is sufficient. Phosphorylation at Ser-266 interferes with access to active site, and thereby inactivates the enzyme. Dephosphorylation at all three sites, i.e. at Ser-205, Ser-266 and Ser-273, is required for reactivation. Acetylation alters the phosphorylation pattern. Deacetylated by SIRT3.

The protein localises to the mitochondrion matrix. It carries out the reaction N(6)-[(R)-lipoyl]-L-lysyl-[protein] + pyruvate + H(+) = N(6)-[(R)-S(8)-acetyldihydrolipoyl]-L-lysyl-[protein] + CO2. Its activity is regulated as follows. Pyruvate dehydrogenase activity is inhibited by phosphorylation of PDHA1; it is reactivated by dephosphorylation. The pyruvate dehydrogenase complex catalyzes the overall conversion of pyruvate to acetyl-CoA and CO(2), and thereby links the glycolytic pathway to the tricarboxylic cycle. In Sminthopsis macroura (Stripe-faced dunnart), this protein is Pyruvate dehydrogenase E1 component subunit alpha, mitochondrial (PDHA).